The following is a 385-amino-acid chain: T-box transcription factor TBX10 (385 aa).

The segment at residues 69–252 (LEMKPLWEEF…SNPFAKGFRE (184 aa)) is a DNA-binding region (T-box). 2 disordered regions span residues 283-310 (GSAE…NQLL) and 328-359 (QNLY…AGDQ). The span at 293–307 (KASASSSRTPTQPHN) shows a compositional bias: polar residues. Positions 331 to 347 (YPGSPSRAGPPRARLAP) are enriched in low complexity.

It localises to the nucleus. Functionally, probable transcriptional regulator involved in developmental processes. The chain is T-box transcription factor TBX10 (Tbx10) from Mus musculus (Mouse).